The sequence spans 420 residues: Glutamate-1-semialdehyde 2,1-aminomutase (420 aa).

Lys261 is subject to N6-(pyridoxal phosphate)lysine.

The protein belongs to the class-III pyridoxal-phosphate-dependent aminotransferase family. HemL subfamily. The cofactor is pyridoxal 5'-phosphate.

It is found in the cytoplasm. The enzyme catalyses (S)-4-amino-5-oxopentanoate = 5-aminolevulinate. It functions in the pathway porphyrin-containing compound metabolism; protoporphyrin-IX biosynthesis; 5-aminolevulinate from L-glutamyl-tRNA(Glu): step 2/2. This chain is Glutamate-1-semialdehyde 2,1-aminomutase, found in Thermoplasma volcanium (strain ATCC 51530 / DSM 4299 / JCM 9571 / NBRC 15438 / GSS1).